A 387-amino-acid polypeptide reads, in one-letter code: EARP-interacting protein homolog (387 aa).

4 WD repeats span residues 132–172, 182–222, 226–266, and 270–310; these read SAHG…AKAT, KGQL…QIYC, AHGQ…EPVK, and EHSH…SEPF. Residues 309–337 form a disordered region; it reads PFGHLVDDDDLSDPEENQQEDKGKEPLQD. The segment covering 315–326 has biased composition (acidic residues); that stretch reads DDDDLSDPEENQ. One copy of the WD 5 repeat lies at 345-385; that stretch reads EHEDSVYAVEWSAADPWLFASLSYDGRLVINRVPRALKYRI.

The protein belongs to the WD repeat EIPR1 family.

The protein localises to the golgi apparatus. Its subcellular location is the trans-Golgi network. May act as a component of endosomal retrieval machinery that is involved in protein transport from early endosomes to either recycling endosomes or the trans-Golgi network. In Danio rerio (Zebrafish), this protein is EARP-interacting protein homolog.